The sequence spans 249 residues: Tumor necrosis factor receptor superfamily member 13B (249 aa).

The Extracellular segment spans residues 1–128; the sequence is MAMAFCPKDQ…LSSDQLTLYC (128 aa). TNFR-Cys repeat units follow at residues 5–38 and 42–76; these read FCPK…TDFC and NCRK…AHFC. 6 cysteine pairs are disulfide-bonded: Cys6–Cys19, Cys22–Cys34, Cys26–Cys38, Cys43–Cys58, Cys61–Cys72, and Cys65–Cys76. The tract at residues 86 to 116 is disordered; that stretch reads LQPELGRPQAGEVEVRSDNSGRHQGSEHGPG. The span at 98–111 shows a compositional bias: basic and acidic residues; it reads VEVRSDNSGRHQGS. The chain crosses the membrane as a helical; Signal-anchor for type III membrane protein span at residues 129–149; the sequence is TLGVCLCAIFCCFLVALASFL. The Cytoplasmic segment spans residues 150–249; it reads RRRGEPLPSQ…ASTGDARPAT (100 aa). The interval 156 to 176 is disordered; that stretch reads LPSQPAGPRGSQANSPHAHRP.

Binds TRAF2, TRAF5 and TRAF6. Binds the NH2-terminal domain of CAMLG with its C-terminus.

Its subcellular location is the membrane. Its function is as follows. Receptor for TNFSF13/APRIL and TNFSF13B/TALL1/BAFF/BLYS that binds both ligands with similar high affinity. Mediates calcineurin-dependent activation of NF-AT, as well as activation of NF-kappa-B and AP-1. Involved in the stimulation of B- and T-cell function and the regulation of humoral immunity. The polypeptide is Tumor necrosis factor receptor superfamily member 13B (Tnfrsf13b) (Mus musculus (Mouse)).